We begin with the raw amino-acid sequence, 239 residues long: Ribonuclease 3 (239 aa).

Residues 12–137 (RAKLEGLIGH…LIAAIYLDGG (126 aa)) enclose the RNase III domain. Mg(2+) is bound at residue E50. Residue D54 is part of the active site. D123 and E126 together coordinate Mg(2+). E126 is an active-site residue. The region spanning 162 to 231 (DAKTELQEWS…ATKMLEREGI (70 aa)) is the DRBM domain.

Belongs to the ribonuclease III family. Homodimer. It depends on Mg(2+) as a cofactor.

The protein resides in the cytoplasm. The enzyme catalyses Endonucleolytic cleavage to 5'-phosphomonoester.. In terms of biological role, digests double-stranded RNA. Involved in the processing of primary rRNA transcript to yield the immediate precursors to the large and small rRNAs (23S and 16S). Processes some mRNAs, and tRNAs when they are encoded in the rRNA operon. Processes pre-crRNA and tracrRNA of type II CRISPR loci if present in the organism. The polypeptide is Ribonuclease 3 (Rhizobium johnstonii (strain DSM 114642 / LMG 32736 / 3841) (Rhizobium leguminosarum bv. viciae)).